The sequence spans 320 residues: Transcription factor bHLH34 (320 aa).

Residues 162 to 213 (SKPGTKACREKLRREKLNDKFMDLSSVLEPGRTPKTDKSAILDDAIRVVNQL) enclose the bHLH domain. Positions 299-320 (WSPLPPADRDTSRDLKNLPPVA) are disordered. Residues 305–314 (ADRDTSRDLK) show a composition bias toward basic and acidic residues.

As to quaternary structure, homodimer. Expressed constitutively in roots, leaves, stems, and flowers.

The protein resides in the nucleus. In Arabidopsis thaliana (Mouse-ear cress), this protein is Transcription factor bHLH34 (BHLH34).